The following is a 314-amino-acid chain: Oxidoreductase NAD-binding domain-containing protein 1 (314 aa).

A signal peptide spans 1-18 (MALVAGSAAYQVLRGVTG). The FAD-binding FR-type domain occupies 63–166 (EIISPAKVCG…VGGEFCFDPQ (104 aa)). Residue 180 to 185 (GVGINP) coordinates NAD(+).

This is Oxidoreductase NAD-binding domain-containing protein 1 (oxnad1) from Xenopus laevis (African clawed frog).